Reading from the N-terminus, the 299-residue chain is Transcription elongation factor A protein 2 (299 aa).

A TFIIS N-terminal domain is found at 5 to 82; the sequence is EEIARIARRL…KSWKKLLDVS (78 aa). Lysine 57 participates in a covalent cross-link: Glycyl lysine isopeptide (Lys-Gly) (interchain with G-Cter in ubiquitin). Serine 59 and serine 100 each carry phosphoserine. The interval 82-127 is disordered; that stretch reads SDGKSRNQGRGTPLPTSSSKDASRTTDLSCKKPDPPRTPSTPRITT. Residues 87 to 101 show a composition bias toward polar residues; that stretch reads RNQGRGTPLPTSSSK. Residues 102–116 show a composition bias toward basic and acidic residues; sequence DASRTTDLSCKKPDP. Residues 138–254 form the TFIIS central domain; it reads VRNKCREMLT…EHQMARTGGT (117 aa). The TFIIS-type zinc finger occupies 257–297; it reads DLFTCNKCRKKNCTYTQVQTRSSDEPMTTYVVCNECGNRWK. Cysteine 261, cysteine 264, cysteine 289, and cysteine 292 together coordinate Zn(2+).

Belongs to the TFS-II family. In terms of assembly, interacts with the basal transcription factor GTF2B. Interacts with REXO1. As to expression, testis and ovary specific. Specific to testicular germ cells.

It is found in the nucleus. Functionally, necessary for efficient RNA polymerase II transcription elongation past template-encoded arresting sites. The arresting sites in DNA have the property of trapping a certain fraction of elongating RNA polymerases that pass through, resulting in locked ternary complexes. Cleavage of the nascent transcript by S-II allows the resumption of elongation from the new 3'-terminus. The chain is Transcription elongation factor A protein 2 (Tcea2) from Mus musculus (Mouse).